A 170-amino-acid polypeptide reads, in one-letter code: Phosphopantetheine adenylyltransferase (170 aa).

Residue T18 participates in substrate binding. ATP contacts are provided by residues 18–19 (TF) and H26. 3 residues coordinate substrate: K50, L84, and R98. ATP-binding positions include 99 to 101 (GLR), E109, and 134 to 140 (WIYISSS).

Belongs to the bacterial CoaD family. Homohexamer. It depends on Mg(2+) as a cofactor.

The protein localises to the cytoplasm. The catalysed reaction is (R)-4'-phosphopantetheine + ATP + H(+) = 3'-dephospho-CoA + diphosphate. It participates in cofactor biosynthesis; coenzyme A biosynthesis; CoA from (R)-pantothenate: step 4/5. In terms of biological role, reversibly transfers an adenylyl group from ATP to 4'-phosphopantetheine, yielding dephospho-CoA (dPCoA) and pyrophosphate. In Desulfotalea psychrophila (strain LSv54 / DSM 12343), this protein is Phosphopantetheine adenylyltransferase.